The chain runs to 370 residues: DNA replication and repair protein RecF (370 aa).

ATP is bound at residue 30 to 37 (GENAQGKT).

Belongs to the RecF family.

The protein localises to the cytoplasm. In terms of biological role, the RecF protein is involved in DNA metabolism; it is required for DNA replication and normal SOS inducibility. RecF binds preferentially to single-stranded, linear DNA. It also seems to bind ATP. The sequence is that of DNA replication and repair protein RecF from Listeria welshimeri serovar 6b (strain ATCC 35897 / DSM 20650 / CCUG 15529 / CIP 8149 / NCTC 11857 / SLCC 5334 / V8).